A 491-amino-acid chain; its full sequence is uncharacterized protein (491 aa).

Positions 1–92 (MSFVIASPEA…GGGSYASAEI (92 aa)) constitute a PE domain. Disordered regions lie at residues 114-156 (PLVG…AGGA), 376-400 (AGGS…GNPG), and 419-491 (AGQG…GPDG). The span at 128–145 (GQPGGDGGILWGNGGNGG) shows a compositional bias: gly residues. Residues 432–480 (GGPGGVGGHGGTAILFGDGGAGGAGAAGGPGTPDGAAGPGGSGGTGGLL) are compositionally biased toward gly residues.

It belongs to the mycobacterial PE family. PGRS subfamily.

This is an uncharacterized protein from Mycobacterium bovis (strain ATCC BAA-935 / AF2122/97).